The sequence spans 187 residues: UPF0232 protein MMAR_0004 (187 aa).

Disordered regions lie at residues 1–77 and 166–187; these read MSDD…QPLG and ASPS…DTYG. The span at 14–30 shows a compositional bias: basic and acidic residues; that stretch reads AARDELSGMDLVRRTLA. Low complexity predominate over residues 31-55; that stretch reads EARAAARARGQDPGRGFAAGPAPRR.

The protein belongs to the UPF0232 family.

The sequence is that of UPF0232 protein MMAR_0004 from Mycobacterium marinum (strain ATCC BAA-535 / M).